A 148-amino-acid chain; its full sequence is PTS system fructose-like EIIA component (148 aa).

The PTS EIIA type-2 domain maps to 2 to 145; sequence AALTASCIDL…DQVLALLNQT (144 aa). H64 serves as the catalytic Tele-phosphohistidine intermediate. Residue H64 is modified to Phosphohistidine; by HPr.

It localises to the cytoplasm. In terms of biological role, the phosphoenolpyruvate-dependent sugar phosphotransferase system (sugar PTS), a major carbohydrate active transport system, catalyzes the phosphorylation of incoming sugar substrates concomitantly with their translocation across the cell membrane. The enzyme II FrvAB PTS system is involved in fructose transport. This Escherichia coli (strain K12) protein is PTS system fructose-like EIIA component.